A 112-amino-acid chain; its full sequence is UPF0122 protein CPE1714 (112 aa).

This sequence belongs to the UPF0122 family.

Its function is as follows. Might take part in the signal recognition particle (SRP) pathway. This is inferred from the conservation of its genetic proximity to ftsY/ffh. May be a regulatory protein. This Clostridium perfringens (strain 13 / Type A) protein is UPF0122 protein CPE1714.